We begin with the raw amino-acid sequence, 131 residues long: Small ribosomal subunit protein uS8 (131 aa).

The protein belongs to the universal ribosomal protein uS8 family. In terms of assembly, part of the 30S ribosomal subunit. Contacts proteins S5 and S12.

Its function is as follows. One of the primary rRNA binding proteins, it binds directly to 16S rRNA central domain where it helps coordinate assembly of the platform of the 30S subunit. The sequence is that of Small ribosomal subunit protein uS8 from Methylobacillus flagellatus (strain ATCC 51484 / DSM 6875 / VKM B-1610 / KT).